A 545-amino-acid polypeptide reads, in one-letter code: SLAIN motif-containing protein 1 (545 aa).

The stretch at 14-53 (TTNGLVANAELEVKKLQELVRKLEKQNEQLRNRASAVSNC) forms a coiled coil. 2 stretches are compositionally biased toward low complexity: residues 268 to 286 (TTST…SLYS) and 466 to 481 (IPSS…SGIP). 2 disordered regions span residues 268–342 (TTST…IRDC) and 461–526 (QGGS…LQPP). Residues 503–522 (STANGSSIPRSKIAQPQRSF) are compositionally biased toward polar residues.

It belongs to the SLAIN motif-containing family.

Its subcellular location is the cytoplasm. The protein localises to the cytoskeleton. Its function is as follows. Microtubule plus-end tracking protein that might be involved in the regulation of cytoplasmic microtubule dynamics, microtubule organization and microtubule elongation. This chain is SLAIN motif-containing protein 1 (slain1), found in Xenopus tropicalis (Western clawed frog).